The primary structure comprises 240 residues: uncharacterized protein (240 aa).

Topologically, residues 1 to 85 (MSGFIKSTLL…LCGCCCWTNT (85 aa)) are cytoplasmic. A helical transmembrane segment spans residues 86 to 106 (IGWAPLLALLPVIGPLLMYWV). Topologically, residues 107–131 (HDKLIELADDRYKLPAEIKVKMHGN) are extracellular. The helical transmembrane segment at 132 to 152 (IVIDLLISLVPILGSVFAWLH) threads the bilayer. Residues 153-240 (ACSTRNAAIV…TNGRPQRGYR (88 aa)) lie on the Cytoplasmic side of the membrane. Positions 181–240 (QKEENEKHSNANTAPPVVGGNKNVNGNRNNSKMYNRPPVTAPPAPAYTRSTNGRPQRGYR) are disordered. Over residues 197 to 210 (VVGGNKNVNGNRNN) the composition is skewed to low complexity.

The protein resides in the membrane. This is an uncharacterized protein from Saccharomyces cerevisiae (strain ATCC 204508 / S288c) (Baker's yeast).